The primary structure comprises 189 residues: Transcription factor FapR (189 aa).

Belongs to the FapR family.

Functionally, transcriptional factor involved in regulation of membrane lipid biosynthesis by repressing genes involved in fatty acid and phospholipid metabolism. This chain is Transcription factor FapR, found in Listeria welshimeri serovar 6b (strain ATCC 35897 / DSM 20650 / CCUG 15529 / CIP 8149 / NCTC 11857 / SLCC 5334 / V8).